The chain runs to 2909 residues: Micronemal protein 15 (2909 aa).

The signal sequence occupies residues 1–29 (MVFRATREPFRLPLVAAFIALFLLKGVTC). Residues asparagine 512, asparagine 563, asparagine 792, asparagine 813, asparagine 986, asparagine 1007, asparagine 1057, asparagine 1142, asparagine 1319, asparagine 1395, and asparagine 1713 are each glycosylated (N-linked (GlcNAc...) asparagine). Residues 1755–1811 (TAIVGEWGEWSACTGTCFSQWWTPKRTRTRLVLAELSHSQIPSVSETATCLDLPPCG) enclose the TSP type-1 1 domain. A disordered region spans residues 1937-2073 (RRKGIMSRRR…RSQARNQTPD (137 aa)). Positions 1967-1977 (SEQSGKASQNG) are enriched in polar residues. Asparagine 1976 is a glycosylation site (N-linked (GlcNAc...) asparagine). The segment covering 1978–1988 (SRRHRASRKQK) has biased composition (basic residues). Residues 2004–2016 (GESTLHGTGTNAY) show a composition bias toward polar residues. Positions 2049–2065 (KARRARRGAGRFRKSRS) are enriched in basic residues. N-linked (GlcNAc...) asparagine glycosylation occurs at asparagine 2333. In terms of domain architecture, TSP type-1 2 spans 2484-2549 (TCDYTEWSEW…EKCDWMPVCP (66 aa)). 3 disulfides stabilise this stretch: cysteine 2485–cysteine 2528, cysteine 2496–cysteine 2500, and cysteine 2542–cysteine 2548. Positions 2552–2587 (EGEEEDDATGGVEPRGEPIVPPWSPERPTDENNQAM) are disordered. Asparagine 2706 carries N-linked (GlcNAc...) asparagine glycosylation. A helical transmembrane segment spans residues 2709–2729 (TWVICLLLGVGGGICFVLSCV). Asparagine 2751, asparagine 2768, and asparagine 2793 each carry an N-linked (GlcNAc...) asparagine glycan. The tract at residues 2759 to 2846 (ESHKLRRQGN…IGQTSPTQQR (88 aa)) is disordered. Residues 2801–2815 (PEEEPWQFEDRDEEP) show a composition bias toward acidic residues. Over residues 2837–2846 (IGQTSPTQQR) the composition is skewed to polar residues.

As to quaternary structure, component of a complex, at least composed of cysteine repeat modular protein A (CRMPa), cysteine repeat modular protein B (CRMPb), micronemal protein 15 (MIC15) and thrombospondin type 1 domain-containing protein (TSP1).

The protein localises to the membrane. Its function is as follows. Required for rhoptry secretion. Plays a role in host cell invasion. This Toxoplasma gondii protein is Micronemal protein 15.